We begin with the raw amino-acid sequence, 108 residues long: Urease subunit beta (108 aa).

The protein belongs to the urease beta subunit family. As to quaternary structure, heterotrimer of UreA (gamma), UreB (beta) and UreC (alpha) subunits. Three heterotrimers associate to form the active enzyme.

It is found in the cytoplasm. The catalysed reaction is urea + 2 H2O + H(+) = hydrogencarbonate + 2 NH4(+). It participates in nitrogen metabolism; urea degradation; CO(2) and NH(3) from urea (urease route): step 1/1. This Microcystis aeruginosa (strain NIES-843 / IAM M-2473) protein is Urease subunit beta.